Reading from the N-terminus, the 261-residue chain is Zinc import ATP-binding protein ZnuC (261 aa).

Residues 6 to 227 form the ABC transporter domain; sequence IQLNNIHLRF…PEYLKLFGKQ (222 aa). ATP is bound at residue 38-45; the sequence is GPNGAGKS.

It belongs to the ABC transporter superfamily. Zinc importer (TC 3.A.1.15.5) family. In terms of assembly, the complex is composed of two ATP-binding proteins (ZnuC), two transmembrane proteins (ZnuB) and a solute-binding protein (ZnuA).

The protein resides in the cell inner membrane. The enzyme catalyses Zn(2+)(out) + ATP(in) + H2O(in) = Zn(2+)(in) + ADP(in) + phosphate(in) + H(+)(in). Functionally, part of the ABC transporter complex ZnuABC involved in zinc import. Responsible for energy coupling to the transport system. This is Zinc import ATP-binding protein ZnuC from Saccharophagus degradans (strain 2-40 / ATCC 43961 / DSM 17024).